The chain runs to 245 residues: MPRYCIVNADDFGYSKGVNYGILEAFQNGVVTSATLMANMPAAEHAARLAKDHPELGVGIHFVLTCGRPLADVPSLVNENGEFPRRGEALVGARRGDIERELCAQLERFFSFGLTPTHIDSHHHVHEHPNVFPVVEQLAERYRLPIRPVRTARPHRLPTVDVFFPDFYGDGLTKDRFISLIDRIGDGQTAEVMCHPAYIDVPLASGSSYCQQRVEELAVLTDPTLVAEMAERGVQLITYREFYKL.

Positions 61 and 122 each coordinate Mg(2+).

Belongs to the YdjC deacetylase family. It depends on Mg(2+) as a cofactor.

Functionally, probably catalyzes the deacetylation of acetylated carbohydrates an important step in the degradation of oligosaccharides. This Geobacillus stearothermophilus (Bacillus stearothermophilus) protein is Carbohydrate deacetylase (celC).